Here is a 103-residue protein sequence, read N- to C-terminus: Large ribosomal subunit protein bL21 (103 aa).

It belongs to the bacterial ribosomal protein bL21 family. In terms of assembly, part of the 50S ribosomal subunit. Contacts protein L20.

In terms of biological role, this protein binds to 23S rRNA in the presence of protein L20. This chain is Large ribosomal subunit protein bL21, found in Aromatoleum aromaticum (strain DSM 19018 / LMG 30748 / EbN1) (Azoarcus sp. (strain EbN1)).